The following is a 178-amino-acid chain: Protein 105R (178 aa).

Positions 1-18 (MYFLFFFLLFLFPVGVKG) are cleaved as a signal peptide.

The chain is Protein 105R from Pantherophis guttatus (Corn snake).